A 587-amino-acid polypeptide reads, in one-letter code: Protein cereblon (587 aa).

Disordered stretches follow at residues 1 to 56, 78 to 113, and 157 to 195; these read MDEE…PAEY, DVLQ…GLPN, and FSQE…IDIG. 2 stretches are compositionally biased toward polar residues: residues 22-31 and 86-96; these read EDQSQSQGLQ and SEGSHPSSDMS. The span at 159–168 shows a compositional bias: basic and acidic residues; that stretch reads QERRRSRTSE. The segment covering 170 to 181 has biased composition (acidic residues); sequence TSQEEAAEEPDD. The segment covering 182 to 191 has biased composition (pro residues); it reads PPPQQPPLPP. The 227-residue stretch at 227-453 folds into the Lon N-terminal domain; the sequence is HMLIFLHHHI…LIKSTFKDET (227 aa). The CULT domain maps to 452-561; the sequence is ETLFFCRYCN…LSGSSVRIGK (110 aa). Cysteine 457, cysteine 460, cysteine 526, and cysteine 529 together coordinate Zn(2+).

Belongs to the CRBN family. As to quaternary structure, likely a component of a DCX (DDB1-CUL4-X-box) protein ligase complex. May interact with pic/DDB1. Ubiquitinated.

The protein localises to the nucleus. It functions in the pathway protein modification; protein ubiquitination. Substrate recognition component of a DCX (DDB1-CUL4-X-box) E3 protein ligase complex that mediates the ubiquitination and subsequent proteasomal degradation of target proteins. Has an essential role in mediating growth by negatively regulating insulin signaling. It also has a role in maintaining presynaptic function in the neuromuscular junction synapses of third-instar larvae. This Drosophila simulans (Fruit fly) protein is Protein cereblon.